Reading from the N-terminus, the 428-residue chain is Light-independent protochlorophyllide reductase subunit N (428 aa).

Cysteine 31, cysteine 56, and cysteine 117 together coordinate [4Fe-4S] cluster.

It belongs to the BchN/ChlN family. As to quaternary structure, protochlorophyllide reductase is composed of three subunits; BchL, BchN and BchB. Forms a heterotetramer of two BchB and two BchN subunits. The cofactor is [4Fe-4S] cluster.

It catalyses the reaction chlorophyllide a + oxidized 2[4Fe-4S]-[ferredoxin] + 2 ADP + 2 phosphate = protochlorophyllide a + reduced 2[4Fe-4S]-[ferredoxin] + 2 ATP + 2 H2O. The protein operates within porphyrin-containing compound metabolism; bacteriochlorophyll biosynthesis (light-independent). Component of the dark-operative protochlorophyllide reductase (DPOR) that uses Mg-ATP and reduced ferredoxin to reduce ring D of protochlorophyllide (Pchlide) to form chlorophyllide a (Chlide). This reaction is light-independent. The NB-protein (BchN-BchB) is the catalytic component of the complex. In Rhodopseudomonas palustris (strain BisB5), this protein is Light-independent protochlorophyllide reductase subunit N.